Here is a 295-residue protein sequence, read N- to C-terminus: SPX domain-containing protein 1 (295 aa).

Residues Met-1–Gln-166 form the SPX domain. Positions Asn-197–Gly-227 are disordered. A compositionally biased stretch (basic and acidic residues) spans Glu-204–Pro-216.

In terms of assembly, interacts (via SPX domain) with PHR2 (via C-terminus). Interacts with RLI1 in the nucleus to prevents its positive regulation of leaf inclination during phosphate (Pi) starvation.

It is found in the nucleus. Involved in plant adaptation to phosphate (Pi) starvation. Inhibits PHR2 DNA-binding activity via a Pi-dependent protein interaction. Suppresses the regulation on expression of PT2 by PHR2 and accumulation of shoot Pi. Optimizes growth under phosphate-limited conditions through a negative feedback loop of the PSI (phosphate starvation-induced) signaling pathway. Regulates the expression of SPX2, SPX3 and SPX5. May be an important link between signal transduction pathways related to phosphate starvation and cold stress. Together with SPX2, plays a negative role in the regulation of leaf inclination by preventing RLI1 transcription factor activity in Pi depleted conditions. In Oryza sativa subsp. indica (Rice), this protein is SPX domain-containing protein 1.